A 419-amino-acid polypeptide reads, in one-letter code: L-rhamnose isomerase (419 aa).

Positions 262, 294, and 296 each coordinate Mn(2+).

The protein belongs to the rhamnose isomerase family. As to quaternary structure, homotetramer. The cofactor is Mn(2+).

Its subcellular location is the cytoplasm. The catalysed reaction is L-rhamnopyranose = L-rhamnulose. It functions in the pathway carbohydrate degradation; L-rhamnose degradation; glycerone phosphate from L-rhamnose: step 1/3. Its function is as follows. Catalyzes the interconversion of L-rhamnose and L-rhamnulose. In Escherichia coli O81 (strain ED1a), this protein is L-rhamnose isomerase.